Consider the following 198-residue polypeptide: Na(+)-translocating NADH-quinone reductase subunit E (198 aa).

6 consecutive transmembrane segments (helical) span residues 11–31 (AVFVENMALAFFLGMCTFLAV), 35–55 (VSTAFGLGIAVTVVLGISVPA), 77–97 (FLNFITFIGVIAAIVQVLEMI), 109–129 (LGIFLPLITVNCAIFGGVSFM), 140–160 (IVYGFGSGMGWMLAIVALAGI), and 176–196 (LGITFISTGLMALGFMSFAGV).

Belongs to the NqrDE/RnfAE family. As to quaternary structure, composed of six subunits; NqrA, NqrB, NqrC, NqrD, NqrE and NqrF.

The protein localises to the cell inner membrane. It catalyses the reaction a ubiquinone + n Na(+)(in) + NADH + H(+) = a ubiquinol + n Na(+)(out) + NAD(+). In terms of biological role, NQR complex catalyzes the reduction of ubiquinone-1 to ubiquinol by two successive reactions, coupled with the transport of Na(+) ions from the cytoplasm to the periplasm. NqrA to NqrE are probably involved in the second step, the conversion of ubisemiquinone to ubiquinol. The protein is Na(+)-translocating NADH-quinone reductase subunit E of Yersinia pestis bv. Antiqua (strain Nepal516).